The sequence spans 102 residues: MQSPKIRIRLRAFDYRAIDRSSQEIVETAKRTGAKVHGPIPLPTRIEKFSVNRSVHVNKKSAEQFEIRTHKRLLDIVDPTARTIDELKKLNLPAGVDITIRI.

The protein belongs to the universal ribosomal protein uS10 family. As to quaternary structure, part of the 30S ribosomal subunit.

Its function is as follows. Involved in the binding of tRNA to the ribosomes. This Akkermansia muciniphila (strain ATCC BAA-835 / DSM 22959 / JCM 33894 / BCRC 81048 / CCUG 64013 / CIP 107961 / Muc) protein is Small ribosomal subunit protein uS10.